The chain runs to 265 residues: MTNWTEIDEIAKKWIREAGARITQSMHESLTIETKSNPNDLVTNIDKETEKFFIDRIQETFPGHRILGEEGQGDKIHSLEGVVWIIDPIDGTMNFVHQQRNFAISIGIFENGEGKIGLIYDVVHDELYHAFSGRGAYMNETKLAPLKETVIEEAILAINATWVTENRRIDQSVLAPLVKRVRGTRSYGSAALELANVAAGRIDAYITMRLAPWDYAAGCVLLNEVGGTYTTIEGEPFTFLENHSVLAGNPSIHKTIFEEYLHARK.

E69, D87, I89, and D90 together coordinate Mg(2+). E69 is a substrate binding site. Substrate is bound by residues 89 to 92 (IDGT), R185, and D214. D214 is a Mg(2+) binding site.

The protein belongs to the inositol monophosphatase superfamily. The cofactor is Mg(2+).

The enzyme catalyses a myo-inositol phosphate + H2O = myo-inositol + phosphate. It catalyses the reaction a ribonucleoside 5'-phosphate + H2O = a ribonucleoside + phosphate. Its function is as follows. Hydrolyzes myo-inositol monophosphate. Catalyzes the dephosphorylation of GMP and IMP. This chain is Inositol-1-monophosphatase, found in Bacillus subtilis (strain 168).